Reading from the N-terminus, the 439-residue chain is Paraneoplastic antigen-like protein 8A (439 aa).

The interval 208 to 439 (SALKAETPNN…RRATNESRKV (232 aa)) is disordered. Basic residues predominate over residues 231–249 (LVRRAGAKSRSRRKKQKKN). Composition is skewed to basic and acidic residues over residues 314–326 (GPRE…RAEA), 395–404 (SRREASDQKA), and 423–439 (AKPE…SRKV).

This sequence belongs to the PNMA family.

The chain is Paraneoplastic antigen-like protein 8A from Homo sapiens (Human).